The following is a 464-amino-acid chain: MEHHNSHLLPGGSEKMYYIAHQQPMLRNEDDNYQEGYFIRPDPASLIYNTTALPADDEGSNYGYGSTTTLSGLQFETYNITVMMNFSCDDYDLLSEDMWSSAYFKIIVYMLYIPIFIFALIGNGTVCYIVYSTPRMRTVTNYFIASLAIGDILMSFFCVPSSFISLFILNYWPFGLALCHFVNYSQAVSVLVSAYTLVAISIDRYIAIMWPLKPRITKRYATFIIAGVWFIALATALPIPIVSGLDIPMSPWHTKCEKYICREMWPSRTQEYYYTLSLFALQFVVPLGVLIFTYARITIRVWAKRPPGEAETNRDQRMARSKRKMVKMMLTVVIVFTCCWLPFNILQLLLNDEEFAHWDPLPYVWFAFHWLAMSHCCYNPIIYCYMNARFRSGFVQLMHRMPGLRRWCCLRSVGDRMNATSGTGPALPLNRMNTSTTYISARRKPRATSLRANPLSCGETSPLR.

The Extracellular segment spans residues 1-105; sequence MEHHNSHLLP…EDMWSSAYFK (105 aa). 3 N-linked (GlcNAc...) asparagine glycosylation sites follow: Asn-49, Asn-79, and Asn-85. Residues 106-126 form a helical membrane-spanning segment; the sequence is IIVYMLYIPIFIFALIGNGTV. The Cytoplasmic portion of the chain corresponds to 127–148; sequence CYIVYSTPRMRTVTNYFIASLA. Residues 149 to 169 traverse the membrane as a helical segment; it reads IGDILMSFFCVPSSFISLFIL. The Extracellular segment spans residues 170 to 189; that stretch reads NYWPFGLALCHFVNYSQAVS. N-linked (GlcNAc...) asparagine glycosylation occurs at Asn-183. The chain crosses the membrane as a helical span at residues 190-210; that stretch reads VLVSAYTLVAISIDRYIAIMW. At 211-221 the chain is on the cytoplasmic side; the sequence is PLKPRITKRYA. A helical membrane pass occupies residues 222 to 242; the sequence is TFIIAGVWFIALATALPIPIV. Residues 243–274 lie on the Extracellular side of the membrane; it reads SGLDIPMSPWHTKCEKYICREMWPSRTQEYYY. The chain crosses the membrane as a helical span at residues 275 to 295; it reads TLSLFALQFVVPLGVLIFTYA. Residues 296-329 lie on the Cytoplasmic side of the membrane; the sequence is RITIRVWAKRPPGEAETNRDQRMARSKRKMVKMM. The helical transmembrane segment at 330–350 threads the bilayer; it reads LTVVIVFTCCWLPFNILQLLL. Residues 351–363 are Extracellular-facing; sequence NDEEFAHWDPLPY. The helical transmembrane segment at 364–384 threads the bilayer; that stretch reads VWFAFHWLAMSHCCYNPIIYC. The Cytoplasmic portion of the chain corresponds to 385-464; that stretch reads YMNARFRSGF…LSCGETSPLR (80 aa).

Belongs to the G-protein coupled receptor 1 family.

It is found in the cell membrane. Receptor for the neuropeptides RYamide-1 and RYamide-2. The activity of this receptor is mediated by G proteins which activate a phosphatidyl-inositol-calcium second messenger system. RYamide signaling may suppress feeding behavior. The polypeptide is RYamide receptor (Drosophila melanogaster (Fruit fly)).